A 295-amino-acid polypeptide reads, in one-letter code: MLFGMARIAIIGGGSIGEALLSGLLRAGRQVKDLVVAERMPDRANYLAQTYSVLVTSAADAVENATFVVVAVKPADVEPVIADLANATAAAENDSAEQVFVTVVAGITIAYFESKLPAGTPVVRAMPNAAALVGAGVTALAKGRFVTPQQLEEVSALFDAVGGVLTVPESQLDAVTAVSGSGPAYFFLLVEALVDAGVGVGLSRQVATDLAAQTMAGSAAMLLERMEQDQGGANGELMGLRVDLTASRLRAAVTSPGGTTAAALRELERGGFRMAVDAAVQAAKSRSEQLRITPE.

The protein belongs to the pyrroline-5-carboxylate reductase family.

The protein resides in the cytoplasm. The catalysed reaction is L-proline + NADP(+) = (S)-1-pyrroline-5-carboxylate + NADPH + 2 H(+). It carries out the reaction L-proline + NAD(+) = (S)-1-pyrroline-5-carboxylate + NADH + 2 H(+). Its pathway is amino-acid biosynthesis; L-proline biosynthesis; L-proline from L-glutamate 5-semialdehyde: step 1/1. Its function is as follows. Catalyzes the reduction of 1-pyrroline-5-carboxylate (PCA) to L-proline. The protein is Pyrroline-5-carboxylate reductase of Mycobacterium tuberculosis (strain CDC 1551 / Oshkosh).